We begin with the raw amino-acid sequence, 143 residues long: AP-4 complex subunit sigma (143 aa).

The protein belongs to the adaptor complexes small subunit family. In terms of assembly, adaptor protein complex 4 (AP-4) is a heterotetramer composed of two large adaptins (epsilon-type subunit and beta-type subunit), a medium adaptin (mu-type subunit) and a small adaptin (sigma-type subunit). Interacts with EHD2.

The protein resides in the golgi apparatus. The protein localises to the trans-Golgi network. Its subcellular location is the membrane. It is found in the coated pit. In terms of biological role, subunit of novel type of clathrin- or non-clathrin-associated protein coat involved in targeting proteins from the trans-Golgi network (TGN) to the endosomal-lysosomal system. In Arabidopsis thaliana (Mouse-ear cress), this protein is AP-4 complex subunit sigma.